The primary structure comprises 92 residues: Small ribosomal subunit protein uS19 (92 aa).

Belongs to the universal ribosomal protein uS19 family.

In terms of biological role, protein S19 forms a complex with S13 that binds strongly to the 16S ribosomal RNA. This Neisseria meningitidis serogroup C (strain 053442) protein is Small ribosomal subunit protein uS19.